Consider the following 381-residue polypeptide: Putative MgpC-like protein MPN_503 (381 aa).

The disordered stretch occupies residues 1–109; the sequence is MNGVAQDKVH…TDSQQSGHNS (109 aa). A compositionally biased stretch (polar residues) spans 13 to 31; sequence EQTTQWNQQASQKNLTNNP. Basic and acidic residues-rich tracts occupy residues 40–51 and 61–73; these read KLDKGRAYRKLN and DSTK…DKDG. Residues 89-109 are compositionally biased toward polar residues; that stretch reads VSSTESQMAAVTDSQQSGHNS.

This sequence belongs to the MgpC family.

The protein is Putative MgpC-like protein MPN_503 of Mycoplasma pneumoniae (strain ATCC 29342 / M129 / Subtype 1) (Mycoplasmoides pneumoniae).